Here is a 513-residue protein sequence, read N- to C-terminus: Solute carrier family 2, facilitated glucose transporter member 7 (513 aa).

The Cytoplasmic segment spans residues 1-21 (MEDKEIGTPLPLPHSEARLQP). Residues 22–42 (TLVLTTLSAAFGSVFQYGYNI) form a helical membrane-spanning segment. At 43 to 78 (AVINTPHKVFKSFYNDTHFERHGTFMDESTLLLLWS) the chain is on the extracellular side. N-linked (GlcNAc...) asparagine glycosylation is present at Asn-57. A helical transmembrane segment spans residues 79–99 (CTVSMFPLGGLLGSLVVGLMV). The Cytoplasmic segment spans residues 100–107 (NKWGRKGT). Residues 108-128 (LLINNVFAITSAVLMGVSKVA) form a helical membrane-spanning segment. Over 129 to 138 (RAFELIILSR) the chain is Extracellular. A helical transmembrane segment spans residues 139-159 (VLVGICAGIAYSTLPMYLGEL). Topologically, residues 160–172 (APQNLRGALGTMT) are cytoplasmic. A helical membrane pass occupies residues 173-193 (EVFVIIGVLLAQIFSLQAILG). The Extracellular portion of the chain corresponds to 194 to 198 (NATGW). A helical membrane pass occupies residues 199–219 (PILLALTGVPAVIQLLSLPFF). At 220 to 282 (PESPRYTLIE…LNLFTFRPLR (63 aa)) the chain is on the cytoplasmic side. Residues 283–303 (WQLISIVVLMAGQQLSGINAV) form a helical membrane-spanning segment. Residues 295 to 296 (QQ) and Asn-301 each bind D-glucose. The Extracellular portion of the chain corresponds to 304 to 322 (NYYADVIYTSAGVDPTQSQ). A helical membrane pass occupies residues 323–343 (YVTLGSGVINLVMTLVSAVII). D-glucose is bound at residue Asn-332. The Cytoplasmic portion of the chain corresponds to 344 to 351 (ERLGRRIL). A helical membrane pass occupies residues 352–372 (LLSGYAICCSACLVLTVALLL). Residues 373-380 (QSTAPELS) are Extracellular-facing. The helical transmembrane segment at 381–401 (YLSIVCVFSYIVGHSIGPSPV) threads the bilayer. Topologically, residues 402–416 (PSVVRTEIVLQSSRT) are cytoplasmic. A helical transmembrane segment spans residues 417–437 (AAFTVDGAVHWLTNFIVGLTF). The Extracellular portion of the chain corresponds to 438-446 (PSIQVAIGA). Residues 447-467 (YSFLVFAGVCILTAAYIYVVI) traverse the membrane as a helical segment. The Cytoplasmic portion of the chain corresponds to 468 to 513 (PETKGRTFVEINCAFAKRNGVEFPEEKEVATAKPHTPSLPTKETAF). Positions 494 to 513 (KEVATAKPHTPSLPTKETAF) are disordered.

This sequence belongs to the major facilitator superfamily. Sugar transporter (TC 2.A.1.1) family. Glucose transporter subfamily.

It is found in the cell membrane. The protein localises to the apical cell membrane. The catalysed reaction is D-glucose(out) = D-glucose(in). It catalyses the reaction D-fructose(out) = D-fructose(in). Functionally, probable sugar transporter. Even if its physiological substrate is subject to discussion, it is able to transport glucose and fructose. Does not transport galactose, 2-deoxy-d-glucose and xylose. This chain is Solute carrier family 2, facilitated glucose transporter member 7, found in Mus musculus (Mouse).